A 109-amino-acid chain; its full sequence is MRGLLPFLFLLSFFLSPIQAQPEGREEELEETWSEDRDQAPPRVVEESEVVGAENEAGLAAGRSYPWIILKKCRERGGQCHSGVCSWNEKFIGFCSFARPCCRKRRAVP.

The signal sequence occupies residues 1–20 (MRGLLPFLFLLSFFLSPIQA). A disordered region spans residues 21-44 (QPEGREEELEETWSEDRDQAPPRV). Residues 21–70 (QPEGREEELEETWSEDRDQAPPRVVEESEVVGAENEAGLAAGRSYPWIIL) constitute a propeptide that is removed on maturation. Over residues 34–44 (SEDRDQAPPRV) the composition is skewed to basic and acidic residues. 3 disulfide bridges follow: cysteine 73–cysteine 101, cysteine 80–cysteine 95, and cysteine 85–cysteine 102. The propeptide occupies 107–109 (AVP).

The protein belongs to the beta-defensin family. Highly expressed in kidney, and expressed at lower levels in testis.

Its subcellular location is the secreted. Has antimicrobial activity. This is Defensin-B5 from Ornithorhynchus anatinus (Duckbill platypus).